Reading from the N-terminus, the 171-residue chain is PIDD1 alternative open reading frame protein (171 aa).

2 disordered regions span residues 1-22 (MSGLQGPSVGDGCNGGGARAGG) and 76-156 (ILAS…LCPA). The span at 84–99 (GPSAAGGHPGPAASEP) shows a compositional bias: low complexity.

In terms of assembly, interacts with calpain-2 catalytic subunit CAPN2. Post-translationally, cleaved in vitro following UV irradiation to induce caspase-mediated apoptosis and this cleavage is inhibited by a broad-spectrum caspase inhibitor.

It is found in the cytoplasm. The protein localises to the cytoskeleton. The chain is PIDD1 alternative open reading frame protein from Homo sapiens (Human).